The following is a 231-amino-acid chain: Thrombin-like enzyme leucurobin (231 aa).

The Peptidase S1 domain maps to 1–223 (VIGGDECDIN…YLPWIQSIIA (223 aa)). Intrachain disulfides connect Cys7–Cys139, Cys26–Cys42, Cys74–Cys230, Cys118–Cys184, Cys150–Cys163, and Cys174–Cys199. Active-site charge relay system residues include His41 and Asp86. An N-linked (GlcNAc...) asparagine glycan is attached at Asn146. The active-site Charge relay system is Ser178. N-linked (GlcNAc...) asparagine glycosylation is present at Asn225.

It belongs to the peptidase S1 family. Snake venom subfamily. As to quaternary structure, monomer. Glycosylated. As to expression, expressed by the venom gland.

Its subcellular location is the secreted. It catalyses the reaction Selective cleavage of Arg-|-Xaa bond in fibrinogen, to form fibrin, and release fibrinopeptide A. The specificity of further degradation of fibrinogen varies with species origin of the enzyme.. Its activity is regulated as follows. Inhibited by PMSF and benzamidine. Its clotting effect is strongly inhibited by antibothropic serum. Is not inhibited by heparin. Functionally, thrombin-like snake venom serine protease that cleaves Arg-Gly bonds in alpha-chain of fibrinogen (FGA). Induces temporary episodes of opisthotonos and rapid rolling around the long axis of the animal (gyroxin-like effect), when injected into the tail veins of mice (0.143 ug/g mouse). The protein is Thrombin-like enzyme leucurobin of Bothrops leucurus (Whitetail lancehead).